A 380-amino-acid polypeptide reads, in one-letter code: Cytochrome b (380 aa).

The next 4 membrane-spanning stretches (helical) occupy residues 34–54 (FGSL…LLAT), 78–99 (WLIR…YLHI), 114–134 (WNTG…GYVL), and 179–199 (FFAL…IHLT). Heme b is bound by residues H84 and H98. Heme b-binding residues include H183 and H197. H202 is a binding site for a ubiquinone. 4 helical membrane passes run 227–247 (LKDI…ALFS), 289–309 (LGGV…PLLH), 321–341 (LSQL…WVGS), and 348–368 (FIII…LLFP).

The protein belongs to the cytochrome b family. The cytochrome bc1 complex contains 11 subunits: 3 respiratory subunits (MT-CYB, CYC1 and UQCRFS1), 2 core proteins (UQCRC1 and UQCRC2) and 6 low-molecular weight proteins (UQCRH/QCR6, UQCRB/QCR7, UQCRQ/QCR8, UQCR10/QCR9, UQCR11/QCR10 and a cleavage product of UQCRFS1). This cytochrome bc1 complex then forms a dimer. Heme b serves as cofactor.

The protein localises to the mitochondrion inner membrane. Functionally, component of the ubiquinol-cytochrome c reductase complex (complex III or cytochrome b-c1 complex) that is part of the mitochondrial respiratory chain. The b-c1 complex mediates electron transfer from ubiquinol to cytochrome c. Contributes to the generation of a proton gradient across the mitochondrial membrane that is then used for ATP synthesis. This Cepphus grylle (Black guillemot) protein is Cytochrome b (MT-CYB).